The sequence spans 542 residues: Serine/threonine-protein phosphatase 2A regulatory subunit pptr-1 (542 aa).

Disordered regions lie at residues 1–28 (MHGS…TGGQ) and 500–542 (DYLK…PAKK). The span at 528 to 542 (KKSSTGSETTTPAKK) shows a compositional bias: polar residues.

This sequence belongs to the phosphatase 2A regulatory subunit B56 family. Part of a complex consisting of a common heterodimeric core enzyme, composed of catalytic subunit let-92 and constant regulatory subunit paa-1, that associates with a variety of regulatory subunits which confer distinct properties to the holoenzyme. Interacts with akt-1 but not akt-2. Interacts with sgk-1. Interacts with P granule components meg-1, meg-3 and meg-4. As to expression, expressed in pharynx, vulva and spermatheca.

The protein localises to the cytoplasm. Its function is as follows. Probable regulatory subunit of serine/threonine-protein phosphatase let-92 which negatively regulates the insulin receptor signaling cascade composed of daf-2, age-1, akt-1, akt-2 and sgk-1 by promoting the dephosphorylation of akt-1 on 'Thr-350'. Negatively regulates several functions controlled by the insulin pathway including dauer formation, lifespan, fat storage and stress resistance. Plays a role in the asymmetric segregation of the P granule components during embryonic cell divisions but does not play an essential role in specifying germ cell fate. Within a PP2A phosphatase complex, acts redundantly with pptr-2, to dephosphorylate P granule components including meg-1 and meg-3 to promote the assembly and accumulation of zygotic P granules in the posterior cytoplasm during zygote polarization, and thus maintain P granule distribution and segregation in early stage embryos following meiosis. In adults, required to promote germ cell proliferation and differentiation when exposed to thermic stress. This Caenorhabditis elegans protein is Serine/threonine-protein phosphatase 2A regulatory subunit pptr-1.